A 248-amino-acid polypeptide reads, in one-letter code: tRNA pseudouridine synthase A (248 aa).

The active-site Nucleophile is the Asp-53. Tyr-111 contacts substrate.

The protein belongs to the tRNA pseudouridine synthase TruA family. Homodimer.

It catalyses the reaction uridine(38/39/40) in tRNA = pseudouridine(38/39/40) in tRNA. In terms of biological role, formation of pseudouridine at positions 38, 39 and 40 in the anticodon stem and loop of transfer RNAs. This Streptococcus thermophilus (strain CNRZ 1066) protein is tRNA pseudouridine synthase A.